The sequence spans 195 residues: Holliday junction branch migration complex subunit RuvA (195 aa).

Positions 1 to 66 (MNYLIFKVIY…LIIKDLYGFR (66 aa)) are domain I. Residues 67-141 (TYNERLLFID…KYINKVNDKN (75 aa)) are domain II. N141 is a region of interest (flexible linker). The domain III stretch occupies residues 141-195 (NNWAKELSIGLENLGYTKKDIEYAITKVKINSQQDIDISEIISSAIKEISLRHEN).

This sequence belongs to the RuvA family. Homotetramer. Forms an RuvA(8)-RuvB(12)-Holliday junction (HJ) complex. HJ DNA is sandwiched between 2 RuvA tetramers; dsDNA enters through RuvA and exits via RuvB. An RuvB hexamer assembles on each DNA strand where it exits the tetramer. Each RuvB hexamer is contacted by two RuvA subunits (via domain III) on 2 adjacent RuvB subunits; this complex drives branch migration. In the full resolvosome a probable DNA-RuvA(4)-RuvB(12)-RuvC(2) complex forms which resolves the HJ.

The protein resides in the cytoplasm. In terms of biological role, the RuvA-RuvB-RuvC complex processes Holliday junction (HJ) DNA during genetic recombination and DNA repair, while the RuvA-RuvB complex plays an important role in the rescue of blocked DNA replication forks via replication fork reversal (RFR). RuvA specifically binds to HJ cruciform DNA, conferring on it an open structure. The RuvB hexamer acts as an ATP-dependent pump, pulling dsDNA into and through the RuvAB complex. HJ branch migration allows RuvC to scan DNA until it finds its consensus sequence, where it cleaves and resolves the cruciform DNA. The sequence is that of Holliday junction branch migration complex subunit RuvA from Ureaplasma parvum serovar 3 (strain ATCC 27815 / 27 / NCTC 11736).